A 75-amino-acid chain; its full sequence is Kappa-conotoxin RIIIK (75 aa).

The N-terminal stretch at 1-19 (MSKLGVLLTICLLLFPLTA) is a signal peptide. The propeptide occupies 20–50 (LPMDGDQPVDRLAERMQDNISSEQHTFFEKR). 4-hydroxyproline is present on residues Pro-52, Pro-63, Pro-65, and Pro-71. 3 disulfide bridges follow: Cys-54–Cys-67, Cys-55–Cys-72, and Cys-62–Cys-73. Thr-74 carries the threonine amide modification.

This sequence belongs to the conotoxin M superfamily. In terms of tissue distribution, expressed by the venom duct.

It is found in the secreted. Functionally, kappa-conotoxins inhibits voltage-gated potassium channels (Kv). This synthetic toxin reversibly inhibits the insect potassium channel Shaker K+, the teleost homolog TSha1 and the mammalian Kv1.2/KCNA2 channel. Interacts with the pore region of the insect channel, in a state-dependent manner. Causes seizure when intracerebrovascularly injected into mice. Is also toxic when intrathecally injected into mice, but shows no visible effects by intraperitoneal injection. Shows protective effects on cardiac tissue when administered after an ischemic event. This Conus radiatus (Rayed cone) protein is Kappa-conotoxin RIIIK.